The following is a 348-amino-acid chain: UPF0283 membrane protein PBPRA2435 (348 aa).

3 helical membrane passes run 71 to 91 (GLLIAGAAMTGWQTVDYVVSA), 97 to 117 (WLALGWSVIVAGIATMGITAL), and 211 to 231 (EAAVMVAMSPLAVADMLLVAW).

The protein belongs to the UPF0283 family.

It is found in the cell inner membrane. The protein is UPF0283 membrane protein PBPRA2435 of Photobacterium profundum (strain SS9).